The sequence spans 402 residues: Multidrug resistance protein MdtH (402 aa).

Helical transmembrane passes span 13 to 33 (YFLLVDNMLVVLGFFVVFPLI), 34 to 54 (SIRFVDQMGWAALMVGIALGL), 99 to 116 (PWVLWFSCILSGLGGTLF), 139 to 159 (ILMMQDSAGAVIGALLGSWLL), 165 to 185 (LVCSAGAALFIACAAFNAWYL), 214 to 234 (VLTLTGYYMLAVQVMLMLPIM), 243 to 263 (AAVKWMYAIEATISLTLLYPI), 277 to 297 (LMAGLLVMTLAMLPIGMTSSL), 300 to 320 (LFTLICLFYIGSIIAEPARET), 340 to 360 (LGLAFGGALGYAGGGWLFDAG), and 369 to 389 (PWLMLGAIGVITFLALWWQFS).

The protein belongs to the major facilitator superfamily. DHA1 family. MdtH (TC 2.A.1.2.21) subfamily.

It localises to the cell inner membrane. The chain is Multidrug resistance protein MdtH from Klebsiella pneumoniae subsp. pneumoniae (strain ATCC 700721 / MGH 78578).